A 450-amino-acid polypeptide reads, in one-letter code: Plasmepsin VII (450 aa).

The first 24 residues, 1-24, serve as a signal peptide directing secretion; it reads MNKNIIQIYLFVFILLLKQHIVIL. Residues 92–441 enclose the Peptidase A1 domain; that stretch reads YYGEVQIGEQ…DKDNLKIGFV (350 aa). Residues Asp-111 and Asp-324 contribute to the active site.

It belongs to the peptidase A1 family.

It is found in the cytoplasm. The polypeptide is Plasmepsin VII (Plasmodium falciparum (isolate NF54)).